Consider the following 325-residue polypeptide: Acetyl-coenzyme A carboxylase carboxyl transferase subunit alpha (325 aa).

Residues 43–297 (ELENNSTQLR…KTSLIAHLRQ (255 aa)) form the CoA carboxyltransferase C-terminal domain.

Belongs to the AccA family. Acetyl-CoA carboxylase is a heterohexamer composed of biotin carboxyl carrier protein (AccB), biotin carboxylase (AccC) and two subunits each of ACCase subunit alpha (AccA) and ACCase subunit beta (AccD).

The protein resides in the cytoplasm. It carries out the reaction N(6)-carboxybiotinyl-L-lysyl-[protein] + acetyl-CoA = N(6)-biotinyl-L-lysyl-[protein] + malonyl-CoA. Its pathway is lipid metabolism; malonyl-CoA biosynthesis; malonyl-CoA from acetyl-CoA: step 1/1. Component of the acetyl coenzyme A carboxylase (ACC) complex. First, biotin carboxylase catalyzes the carboxylation of biotin on its carrier protein (BCCP) and then the CO(2) group is transferred by the carboxyltransferase to acetyl-CoA to form malonyl-CoA. In Cyanothece sp. (strain PCC 7425 / ATCC 29141), this protein is Acetyl-coenzyme A carboxylase carboxyl transferase subunit alpha.